The sequence spans 351 residues: Quinolinate phosphoribosyltransferase [decarboxylating] 2b, mitochondrial (351 aa).

Residues Arg142, 173-175 (TRK), Arg197, Lys207, Glu240, Asp267, 299-301 (SGN), and 320-322 (SGA) each bind substrate.

Belongs to the NadC/ModD family. As to expression, expressed in roots and flowers.

It localises to the mitochondrion. The catalysed reaction is nicotinate beta-D-ribonucleotide + CO2 + diphosphate = quinolinate + 5-phospho-alpha-D-ribose 1-diphosphate + 2 H(+). Its pathway is alkaloid biosynthesis; nicotine biosynthesis. The protein operates within cofactor biosynthesis; NAD(+) biosynthesis; nicotinate D-ribonucleotide from quinolinate: step 1/1. Its function is as follows. Involved in the biosynthesis of pyridine alkaloid natural products, leading mainly to the production of anabasine, anatabine, nicotine and nornicotine, effective deterrents against herbivores with antiparasitic and pesticide properties (neurotoxins); nornicotine serves as the precursor in the synthesis of the carcinogen compound N'-nitrosonornicotine (NNN). Involved in the catabolism of quinolinic acid (QA). This Nicotiana tabacum (Common tobacco) protein is Quinolinate phosphoribosyltransferase [decarboxylating] 2b, mitochondrial.